Here is a 172-residue protein sequence, read N- to C-terminus: CD-NTase-associated protein 7 (172 aa).

The tract at residues 141 to 172 (AQSPGINGYLENDKTYSAGGRSLTRTSVRNFV) is required for binding to CdnC and to confer phage immunity.

Belongs to the bacterial HORMA family. HORMA1 subfamily. Forms complexes with CdnC with 1:1 and 2:2 stoichimetry, and a 1:1:6 CdnC:Cap7:Cap6 complex.

In terms of biological role, sensor protein of a CBASS antivirus system. CBASS (cyclic oligonucleotide-based antiphage signaling system) provides immunity against bacteriophage. The CD-NTase protein synthesizes cyclic nucleotides in response to infection; these serve as specific second messenger signals. The signals activate a diverse range of effectors, leading to bacterial cell death and thus abortive phage infection. A type III-C(AAA) CBASS system. Its function is as follows. Binds to a closure peptide (consensus His-Xaa-Xaa-Ile-Leu-Leu-Thr), which allows it to activate CdnC for second messenger synthesis. Protects E.coli strain JP313 against bacteriophage lambda cI- infection. When the cdnC-cap7-cap6-nucC operon is transformed into a susceptible strain it confers bacteriophage immunity. Mutations in the sensor (Cap7 also called HORMA) or effector proteins (CdnC, NucC) but not the disassembly protein (Cap6 also called Trip13) no longer confer immunity. The presence of the intact operon leads to culture collapse and cell death, which occurs before the phage has finished its replication cycle, thus protecting non-infected bacteria by aborting the phage infection and preventing its propagation. The sequence is that of CD-NTase-associated protein 7 from Escherichia coli (strain MS 115-1).